The chain runs to 212 residues: MIMDKSIPKATAKRLSLYYRIFKRFNTDGIEKASSKQIADALGIDSATVRRDFSYFGELGRRGFGYDVKKLMNFFAEILNDHSTTNVMLVGCGNIGRALLHYRFHDRNKMQISMAFDLDSNDLVGKTTEDGIPVYGISTINDHLIDSDIETAILTVPSTEAQEVADILVKAGIKGILSFSPVHLTLPKDIIVQYVDLTSELQTLLYFMNQQR.

A DNA-binding region (H-T-H motif) is located at residues L17 to F56. G91 to G96 contacts NAD(+).

It belongs to the transcriptional regulatory Rex family. Homodimer.

Its subcellular location is the cytoplasm. Its function is as follows. Modulates transcription in response to changes in cellular NADH/NAD(+) redox state. The protein is Redox-sensing transcriptional repressor Rex of Streptococcus agalactiae serotype III (strain NEM316).